The following is a 305-amino-acid chain: Probable lipid kinase YegS-like (305 aa).

Positions 1–129 constitute a DAGKc domain; sequence MTQRRAMLIL…VDLGEVGGKL (129 aa). ATP is bound by residues Thr39, 65–71, and Thr92; that span reads GDGTLRD. Leu210, Asp213, and Leu215 together coordinate Mg(2+). Glu268 serves as the catalytic Proton acceptor.

This sequence belongs to the diacylglycerol/lipid kinase family. YegS lipid kinase subfamily. Mg(2+) serves as cofactor. It depends on Ca(2+) as a cofactor.

The protein resides in the cytoplasm. Functionally, probably phosphorylates lipids; the in vivo substrate is unknown. In Pseudomonas syringae pv. tomato (strain ATCC BAA-871 / DC3000), this protein is Probable lipid kinase YegS-like.